The primary structure comprises 356 residues: Protein RecA (356 aa).

Position 79–86 (79–86 (GPESSGKT)) interacts with ATP.

It belongs to the RecA family.

It localises to the cytoplasm. In terms of biological role, can catalyze the hydrolysis of ATP in the presence of single-stranded DNA, the ATP-dependent uptake of single-stranded DNA by duplex DNA, and the ATP-dependent hybridization of homologous single-stranded DNAs. It interacts with LexA causing its activation and leading to its autocatalytic cleavage. In Borrelia hermsii (strain HS1 / DAH), this protein is Protein RecA.